The primary structure comprises 85 residues: RNA-binding protein Hfq (85 aa).

In terms of domain architecture, Sm spans 11–71; the sequence is DTFLNHVRKS…ISTIMPGHPV (61 aa).

The protein belongs to the Hfq family. Homohexamer.

Functionally, RNA chaperone that binds small regulatory RNA (sRNAs) and mRNAs to facilitate mRNA translational regulation in response to envelope stress, environmental stress and changes in metabolite concentrations. Also binds with high specificity to tRNAs. Seems to be involved in the regulation of NifA. The protein is RNA-binding protein Hfq of Azorhizobium caulinodans (strain ATCC 43989 / DSM 5975 / JCM 20966 / LMG 6465 / NBRC 14845 / NCIMB 13405 / ORS 571).